A 61-amino-acid polypeptide reads, in one-letter code: UPF0434 protein Bpet2671 (61 aa).

Belongs to the UPF0434 family.

The protein is UPF0434 protein Bpet2671 of Bordetella petrii (strain ATCC BAA-461 / DSM 12804 / CCUG 43448).